The sequence spans 512 residues: NAD(P) transhydrogenase subunit alpha (512 aa).

Over methionine 1 to valine 400 the chain is Cytoplasmic. NAD(+) is bound by residues glutamine 125 to aspartate 128, valine 175, aspartate 195 to arginine 197, and glycine 225. The interval serine 375 to lysine 394 is disordered. The next 2 helical transmembrane spans lie at lysine 401–alanine 421 and alanine 422–tryptophan 442. The Cytoplasmic segment spans residues asparagine 443–proline 451. Residues leucine 452 to arginine 472 form a helical membrane-spanning segment. The Periplasmic portion of the chain corresponds to glutamine 473 to leucine 478. The chain crosses the membrane as a helical span at residues phenylalanine 479–phenylalanine 499. Over arginine 500–glycine 512 the chain is Cytoplasmic.

The protein belongs to the AlaDH/PNT family. In terms of assembly, heterodimer of an alpha (PntA) and a beta (PntB) chain.

The protein resides in the cell inner membrane. It carries out the reaction NAD(+) + NADPH + H(+)(in) = NADH + NADP(+) + H(+)(out). Functionally, the transhydrogenation between NADH and NADP is coupled to respiration and ATP hydrolysis and functions as a proton pump across the membrane. The chain is NAD(P) transhydrogenase subunit alpha (pntA) from Haemophilus influenzae (strain ATCC 51907 / DSM 11121 / KW20 / Rd).